The chain runs to 390 residues: Putative gustatory receptor 36c (390 aa).

The Cytoplasmic segment spans residues 1–4 (MDLE). The helical transmembrane segment at 5–25 (SFLLGAVYYYGLFIGLSNFEF) threads the bilayer. Topologically, residues 26–36 (DWNTGRVFTKK) are extracellular. Residues 37-57 (WSTLYAIALDSCIFALYIYHW) form a helical membrane-spanning segment. At 58–75 (TGNTNIVNAIFGRANMLH) the chain is on the cytoplasmic side. Residues 76–96 (EYVVAILTGLRIVTGLFTLIL) traverse the membrane as a helical segment. At 97-132 (RWYQRCKMMDLASKVVRMYVARPQVRRMSRWGILTK) the chain is on the extracellular side. The helical transmembrane segment at 133–153 (FIFGSITDGLQMAMVLSAMGS) threads the bilayer. Residues 154–165 (VDSQFYLGLGLQ) are Cytoplasmic-facing. The helical transmembrane segment at 166 to 186 (YWMFVILNMAMMQQHMIMLFV) threads the bilayer. The Extracellular portion of the chain corresponds to 187-254 (RTQFQLINTE…MEEVFGIQGA (68 aa)). A helical transmembrane segment spans residues 255-275 (MTYGGYYLSSVGTCYLAYSIL). The Cytoplasmic portion of the chain corresponds to 276-288 (KHGYENLSMTLST). A helical transmembrane segment spans residues 289–309 (VILAYSWCFFYYLDGMLNLSV). Residues 310–390 (MLHVQDDYWE…FLIQYDIEHF (81 aa)) lie on the Extracellular side of the membrane.

This sequence belongs to the insect chemoreceptor superfamily. Gustatory receptor (GR) family. Gr22e subfamily. As to expression, expressed in neurons of the terminal external chemosensory organ of larvae.

It is found in the cell membrane. In terms of biological role, probable gustatory receptor which mediates acceptance or avoidance behavior, depending on its substrates. The polypeptide is Putative gustatory receptor 36c (Gr36c) (Drosophila melanogaster (Fruit fly)).